Here is an 85-residue protein sequence, read N- to C-terminus: Probable small nuclear ribonucleoprotein G (85 aa).

The region spanning 6–78 (QADPDLTKLL…ILLMEPLESM (73 aa)) is the Sm domain.

The protein belongs to the snRNP Sm proteins family. As to quaternary structure, core component of the spliceosomal U1, U2, U4 and U5 small nuclear ribonucleoproteins (snRNPs), the building blocks of the spliceosome. Most spliceosomal snRNPs contain a common set of Sm proteins, SNRPB, SNRPD1, SNRPD2, SNRPD3, SNRPE, SNRPF and SNRPG that assemble in a heptameric protein ring on the Sm site of the small nuclear RNA to form the core snRNP. Component of the U1 snRNP. Component of the U4/U6-U5 tri-snRNP complex. Component of the U7 snRNP complex. Component of the U11/U12 snRNPs that are part of the U12-type spliceosome.

The protein localises to the cytoplasm. It is found in the cytosol. It localises to the nucleus. Plays a role in pre-mRNA splicing as a core component of the spliceosomal U1, U2, U4 and U5 small nuclear ribonucleoproteins (snRNPs), the building blocks of the spliceosome. Component of both the pre-catalytic spliceosome B complex and activated spliceosome C complexes. Is also a component of the minor U12 spliceosome. The chain is Probable small nuclear ribonucleoprotein G (snrpG) from Dictyostelium discoideum (Social amoeba).